The following is a 211-amino-acid chain: tRNA (guanine-N(7)-)-methyltransferase (211 aa).

The S-adenosyl-L-methionine site is built by glutamate 43, glutamate 68, asparagine 95, and aspartate 117. Aspartate 117 is an active-site residue. Substrate contacts are provided by residues lysine 121, aspartate 153, and 190-193; that span reads TEYE.

Belongs to the class I-like SAM-binding methyltransferase superfamily. TrmB family.

The catalysed reaction is guanosine(46) in tRNA + S-adenosyl-L-methionine = N(7)-methylguanosine(46) in tRNA + S-adenosyl-L-homocysteine. It participates in tRNA modification; N(7)-methylguanine-tRNA biosynthesis. Its function is as follows. Catalyzes the formation of N(7)-methylguanine at position 46 (m7G46) in tRNA. The polypeptide is tRNA (guanine-N(7)-)-methyltransferase (Alkaliphilus oremlandii (strain OhILAs) (Clostridium oremlandii (strain OhILAs))).